A 673-amino-acid polypeptide reads, in one-letter code: Cyclic nucleotide-binding domain-containing protein 2 (673 aa).

Positions 1–15 (MNRSANPEAASSTSH) are enriched in polar residues. The tract at residues 1 to 89 (MNRSANPEAA…PQPKDRPGVQ (89 aa)) is disordered. A compositionally biased stretch (basic and acidic residues) spans 43–86 (PADKSDTTESKSESGSDSRSEEDKESPASIKEIKAETPQPKDRP). 206-329 (CYRSYTESLQ…ETQYRYNFFR (124 aa)) is an a nucleoside 3',5'-cyclic phosphate binding site.

Testis-specific. Exclusively expressed in testicular germ cells while it is not present in mature sperm (at protein level).

It is found in the cytoplasm. The protein resides in the cytosol. Its function is as follows. Essential for male fertility. Plays an important role in spermatogenesis and regulates sperm motility by controlling the development of the flagellar bending of sperm. The polypeptide is Cyclic nucleotide-binding domain-containing protein 2 (Cnbd2) (Mus musculus (Mouse)).